An 83-amino-acid chain; its full sequence is MIKIVVGSVSTNVIGILCILLILIGGGLLIGIGIRRELERERQHQRVLERLARRLSIDSGVEEDEEFNWNNFDPHNYNPRDWI.

Residues 1–13 (MIKIVVGSVSTNV) lie on the Extracellular side of the membrane. A helical membrane pass occupies residues 14 to 34 (IGILCILLILIGGGLLIGIGI). At 35 to 83 (RRELERERQHQRVLERLARRLSIDSGVEEDEEFNWNNFDPHNYNPRDWI) the chain is on the cytoplasmic side. A Phosphoserine; by host CK2 modification is found at serine 59.

As to quaternary structure, homopentamer. Interacts with host CD4 and BRTC; these interactions induce proteasomal degradation of CD4. Interacts with host BST2; this interaction leads to the degradation of host BST2. Interacts with host FBXW11. Interacts with host AP1M1; this interaction plays a role in the mistrafficking and subsequent degradation of host BST2. Interacts with host RANBP2; this interaction allows Vpu to down-regulate host BLM sumoylation. Post-translationally, phosphorylated by host CK2. This phosphorylation is necessary for interaction with host BRCP and degradation of CD4, but not for enhancement of virion budding.

It localises to the host membrane. Its activity is regulated as follows. Ion channel activity is inhibited by hexamethylene amiloride in vitro. Its function is as follows. Enhances virion budding, by targeting human CD4 and Tetherin/BST2 to proteasome degradation. Degradation of CD4 prevents any unwanted premature interactions between viral Env and its receptor human CD4 in the endoplasmic reticulum. Degradation of antiretroviral protein Tetherin/BST2 is important for virion budding, as BST2 tethers new viral particles to the host cell membrane. Mechanistically, Vpu bridges either CD4 or BST2 to BTRC, a substrate recognition subunit of the Skp1/Cullin/F-box protein E3 ubiquitin ligase, induces their ubiquitination and subsequent proteasomal degradation. The alteration of the E3 ligase specificity by Vpu seems to interfere with the degradation of host IKBKB, leading to NF-kappa-B down-regulation and subsequent apoptosis. Acts as a viroporin that forms an oligomeric ion channel in membranes. Modulates the host DNA repair mechanisms to promote degradation of nuclear viral cDNA in cells that are already productively infected in order to suppress immune sensing and proviral hyper-integration (superinfection). Manipulates PML-NBs and modulates SUMOylation of host BLM protein thereby enhancing its DNA-end processing activity toward viral unintegrated linear DNA. Also inhibits RAD52-mediated homologous repair of viral cDNA, preventing the generation of dead-end circular forms of single copies of the long terminal repeat and permitting sustained nucleolytic attack. The chain is Protein Vpu (vpu) from Simian immunodeficiency virus (isolate TAN1) (SIV-cpz).